A 318-amino-acid polypeptide reads, in one-letter code: Homoserine kinase (318 aa).

97–107 is an ATP binding site; sequence PIGSGLGSSAC.

This sequence belongs to the GHMP kinase family. Homoserine kinase subfamily.

The protein localises to the cytoplasm. It catalyses the reaction L-homoserine + ATP = O-phospho-L-homoserine + ADP + H(+). The protein operates within amino-acid biosynthesis; L-threonine biosynthesis; L-threonine from L-aspartate: step 4/5. Catalyzes the ATP-dependent phosphorylation of L-homoserine to L-homoserine phosphate. The protein is Homoserine kinase of Vibrio cholerae serotype O1 (strain M66-2).